Reading from the N-terminus, the 568-residue chain is Proline--tRNA ligase (568 aa).

This sequence belongs to the class-II aminoacyl-tRNA synthetase family. ProS type 1 subfamily. In terms of assembly, homodimer.

It localises to the cytoplasm. It catalyses the reaction tRNA(Pro) + L-proline + ATP = L-prolyl-tRNA(Pro) + AMP + diphosphate. Its function is as follows. Catalyzes the attachment of proline to tRNA(Pro) in a two-step reaction: proline is first activated by ATP to form Pro-AMP and then transferred to the acceptor end of tRNA(Pro). As ProRS can inadvertently accommodate and process non-cognate amino acids such as alanine and cysteine, to avoid such errors it has two additional distinct editing activities against alanine. One activity is designated as 'pretransfer' editing and involves the tRNA(Pro)-independent hydrolysis of activated Ala-AMP. The other activity is designated 'posttransfer' editing and involves deacylation of mischarged Ala-tRNA(Pro). The misacylated Cys-tRNA(Pro) is not edited by ProRS. In Campylobacter jejuni subsp. jejuni serotype O:6 (strain 81116 / NCTC 11828), this protein is Proline--tRNA ligase.